The following is a 152-amino-acid chain: Ubiquitin-conjugating enzyme E2 N (152 aa).

The region spanning 3-149 (GLPRRIIKET…ARAWTRLYAM (147 aa)) is the UBC core domain. Lys-82 carries the N6-acetyllysine modification. The active-site Glycyl thioester intermediate is Cys-87. Lys-92 participates in a covalent cross-link: Glycyl lysine isopeptide (Lys-Gly) (interchain with G-Cter in ISG15).

The protein belongs to the ubiquitin-conjugating enzyme family. In terms of assembly, heterodimer with UBE2V2. Interacts (UBE2V2-UBE2N heterodimer) with the E3 ligase STUB1 (via the U-box domain); the complex has a specific 'Lys-63'-linked polyubiquitination activity. Interacts with RNF8 and RNF168. Interacts with RNF11. Interacts with the E3 ligases, HLTF and SHPRH; the interactions promote the 'Lys-63'-linked polyubiquitination of PCNA upon genotoxic stress and lead to DNA repair. Interacts with ARIH2 (via RING-type 2). Interacts with OTUB1; leading to inhibit E2-conjugating activity. Interacts with RIGI and RNF135; involved in RIGI ubiquitination and activation. In terms of processing, conjugation to ISG15 impairs formation of the thioester bond with ubiquitin but not interaction with UBE2V2.

The catalysed reaction is S-ubiquitinyl-[E1 ubiquitin-activating enzyme]-L-cysteine + [E2 ubiquitin-conjugating enzyme]-L-cysteine = [E1 ubiquitin-activating enzyme]-L-cysteine + S-ubiquitinyl-[E2 ubiquitin-conjugating enzyme]-L-cysteine.. It participates in protein modification; protein ubiquitination. Activity is inhibited by binding to OTUB1, which prevents 'Lys-63'-linked polyubiquitination. The UBE2V1-UBE2N and UBE2V2-UBE2N heterodimers catalyze the synthesis of non-canonical 'Lys-63'-linked polyubiquitin chains. This type of polyubiquitination does not lead to protein degradation by the proteasome. Mediates transcriptional activation of target genes. Plays a role in the control of progress through the cell cycle and differentiation. Plays a role in the error-free DNA repair pathway and contributes to the survival of cells after DNA damage. Acts together with the E3 ligases, HLTF and SHPRH, in the 'Lys-63'-linked poly-ubiquitination of PCNA upon genotoxic stress, which is required for DNA repair. Appears to act together with E3 ligase RNF5 in the 'Lys-63'-linked polyubiquitination of JKAMP thereby regulating JKAMP function by decreasing its association with components of the proteasome and ERAD. Promotes TRIM5 capsid-specific restriction activity and the UBE2V1-UBE2N heterodimer acts in concert with TRIM5 to generate 'Lys-63'-linked polyubiquitin chains which activate the MAP3K7/TAK1 complex which in turn results in the induction and expression of NF-kappa-B and MAPK-responsive inflammatory genes. Together with RNF135 and UB2V1, catalyzes the viral RNA-dependent 'Lys-63'-linked polyubiquitination of RIGI to activate the downstream signaling pathway that leads to interferon beta production. UBE2V1-UBE2N together with TRAF3IP2 E3 ubiquitin ligase mediate 'Lys-63'-linked polyubiquitination of TRAF6, a component of IL17A-mediated signaling pathway. The polypeptide is Ubiquitin-conjugating enzyme E2 N (UBE2N) (Macaca fascicularis (Crab-eating macaque)).